We begin with the raw amino-acid sequence, 540 residues long: Coiled-coil domain-containing protein 116 (540 aa).

Positions 79–102 (QVLDSLQTVVEQATECVATMKTEA) form a coiled coil. The tract at residues 347–400 (PGNSDLQPSSKASLPTDREARGETCYSPTSASSPKTSHRKSKDRRGSPSNAVQM) is disordered. 2 stretches are compositionally biased toward polar residues: residues 350–359 (SDLQPSSKAS) and 372–381 (YSPTSASSPK). Residue S393 is modified to Phosphoserine.

The protein resides in the cytoplasm. It localises to the cytoskeleton. Its subcellular location is the microtubule organizing center. It is found in the centrosome. This chain is Coiled-coil domain-containing protein 116 (Ccdc116), found in Rattus norvegicus (Rat).